Reading from the N-terminus, the 520-residue chain is BBSome complex member BBS4 (520 aa).

The segment at 1–26 (MAEVKLGMKTQVPASVESQKPRSKKA) is disordered. The interval 1-66 (MAEVKLGMKT…EQLQETQGLC (66 aa)) is required for localization to centrosomes. TPR repeat units lie at residues 67-100 (EYAI…SPQC), 102-134 (DNLK…NQKD), 135-167 (WEIC…LNKH), 168-201 (DLTY…SPEN), 203-235 (ELLT…DPAN), 237-269 (KAIL…IPES), 270-303 (PPLW…APFD), 304-337 (WKIL…QPKM), 339-371 (ELYM…DKCN), and 373-408 (LVNL…LKDN). Residues 101–337 (ADNLKQVARS…SAAINFQPKM (237 aa)) form an interaction with PCM1 region. A required for localization to centrosomes region spans residues 338–520 (GELYMLLAVA…TEASEQKKEK (183 aa)). The tract at residues 488–520 (AQLPKPPSLPLEPEPEPTVEASPTEASEQKKEK) is disordered.

This sequence belongs to the BBS4 family. Part of BBSome complex, that contains BBS1, BBS2, BBS4, BBS5, BBS7, BBS8/TTC8, BBS9 and BBIP10. Interacts with PCM1 and DCTN1. Interacts with DC28B. Interacts with ALDOB and C2CD3. Interacts with PKD1. Interacts with CEP290. Interacts with DLEC1. Expressed in the hippocampus and dentate gyrus, the columnar epithelial cells of bronchioles, the olfactory epithelium and the inner segment and outer nuclear layer of the retina. Expressed in testis.

It localises to the cytoplasm. The protein localises to the cytoskeleton. The protein resides in the microtubule organizing center. It is found in the centrosome. Its subcellular location is the cell projection. It localises to the cilium membrane. The protein localises to the centriolar satellite. The protein resides in the cilium. It is found in the flagellum. Functionally, the BBSome complex is thought to function as a coat complex required for sorting of specific membrane proteins to the primary cilia. The BBSome complex is required for ciliogenesis but is dispensable for centriolar satellite function. This ciliogenic function is mediated in part by the Rab8 GDP/GTP exchange factor, which localizes to the basal body and contacts the BBSome. Rab8(GTP) enters the primary cilium and promotes extension of the ciliary membrane. Firstly the BBSome associates with the ciliary membrane and binds to RAB3IP/Rabin8, the guanosyl exchange factor (GEF) for Rab8 and then the Rab8-GTP localizes to the cilium and promotes docking and fusion of carrier vesicles to the base of the ciliary membrane. The BBSome complex, together with the LTZL1, controls SMO ciliary trafficking and contributes to the sonic hedgehog (SHH) pathway regulation. Required for proper BBSome complex assembly and its ciliary localization. Required for microtubule anchoring at the centrosome but not for microtubule nucleation. May be required for the dynein-mediated transport of pericentriolar proteins to the centrosome. This is BBSome complex member BBS4 (Bbs4) from Mus musculus (Mouse).